A 553-amino-acid polypeptide reads, in one-letter code: MNPSTALARVLVDELARLGLTEAVIAPGSRSTPLALALVADTRIRTHVRIDERSASFLAVGLARASRRPVALVCTSGTAAANFHPAVLEADQSGVSLIVLTADRPPELRGTGANQTVNQIGLYGSAVRFFAEVGVPEREAGMVAYWRSLVCRAWAAAQANKPGPVHLNLAFREPLVPEPGGQPWPEPVTGRPDGKPWITVDLQRNEPEPVELPWVERGVIVCGDGDYDPIPLLALSAQTGWPLLAEPTSNARRAEALSSYRQLLAVPEFVAAHEPELVVSVGRPGLSRQLLAYLRRAPRHVVVGDPVAFADPVRTATDVVGAVTAPPSATPDTAWAASWAAAEAAARAAADRLLDSDETLSELRLARDLAAHLPAGSLLFAGASMPIRDLDAVMRPRCGLRLIGNRGVSGIDGTVSTAVGAALAHQADGGGEAFALLGDLALLHDQNGLLLGPDEPRPNLTIVVVNNDGGGIFSELEQAGHPDFERVFGTPHGVAVEQVAATAGLPYTRVEWATDLPKALIGDGLRLVEVRTDRAASARLRRALQEAVAAAVR.

The protein belongs to the TPP enzyme family. MenD subfamily. Homodimer. The cofactor is Mg(2+). Mn(2+) serves as cofactor. Requires thiamine diphosphate as cofactor.

It carries out the reaction isochorismate + 2-oxoglutarate + H(+) = 5-enolpyruvoyl-6-hydroxy-2-succinyl-cyclohex-3-ene-1-carboxylate + CO2. Its pathway is quinol/quinone metabolism; 1,4-dihydroxy-2-naphthoate biosynthesis; 1,4-dihydroxy-2-naphthoate from chorismate: step 2/7. It functions in the pathway quinol/quinone metabolism; menaquinone biosynthesis. Catalyzes the thiamine diphosphate-dependent decarboxylation of 2-oxoglutarate and the subsequent addition of the resulting succinic semialdehyde-thiamine pyrophosphate anion to isochorismate to yield 2-succinyl-5-enolpyruvyl-6-hydroxy-3-cyclohexene-1-carboxylate (SEPHCHC). The polypeptide is 2-succinyl-5-enolpyruvyl-6-hydroxy-3-cyclohexene-1-carboxylate synthase (Thermobifida fusca (strain YX)).